The sequence spans 322 residues: UDP-N-acetylenolpyruvoylglucosamine reductase (322 aa).

The FAD-binding PCMH-type domain maps to 36-202 (RAGGPAQVLF…TSVLFEGVPG (167 aa)). R182 is an active-site residue. The active-site Proton donor is S231. E301 is a catalytic residue.

Belongs to the MurB family. It depends on FAD as a cofactor.

The protein localises to the cytoplasm. It catalyses the reaction UDP-N-acetyl-alpha-D-muramate + NADP(+) = UDP-N-acetyl-3-O-(1-carboxyvinyl)-alpha-D-glucosamine + NADPH + H(+). It functions in the pathway cell wall biogenesis; peptidoglycan biosynthesis. Its function is as follows. Cell wall formation. The chain is UDP-N-acetylenolpyruvoylglucosamine reductase from Brucella melitensis biotype 2 (strain ATCC 23457).